The chain runs to 433 residues: Urokinase-type plasminogen activator (433 aa).

The N-terminal stretch at 1–20 is a signal peptide; sequence MRVLLACLLVCALVVSDSDG. In terms of domain architecture, EGF-like spans 29 to 65; the sequence is GESNCGCLNGGKCVTYKYFSNIQRCSCPKKFQGEHCE. Intrachain disulfides connect cysteine 33–cysteine 41, cysteine 35–cysteine 53, cysteine 55–cysteine 64, cysteine 72–cysteine 153, cysteine 93–cysteine 135, and cysteine 124–cysteine 148. Residues 36 to 59 are binds urokinase plasminogen activator surface receptor; that stretch reads LNGGKCVTYKYFSNIQRCSCPKKF. The Kringle domain maps to 72-153; that stretch reads CYQGNGHSYR…FVQFCMVQDC (82 aa). Positions 154 to 180 are connecting peptide; that stretch reads SVGKSPSSPREKEEFQCGQKALRPRFK. Serine 160 bears the Phosphoserine mark. Intrachain disulfides connect cysteine 170/cysteine 301, cysteine 211/cysteine 227, cysteine 219/cysteine 290, cysteine 315/cysteine 384, cysteine 347/cysteine 363, and cysteine 374/cysteine 402. Residues 181 to 426 enclose the Peptidase S1 domain; sequence IVGGQVTNAE…FLPWINTHTR (246 aa). Active-site charge relay system residues include histidine 226 and aspartate 277. Serine 378 (charge relay system) is an active-site residue.

This sequence belongs to the peptidase S1 family. In terms of assembly, found in high and low molecular mass forms. Each consists of two chains, A and B. The high molecular mass form contains a long chain A which is cleaved to yield a short chain A. Forms heterodimer with SERPINA5. Binds LRP1B; binding is followed by internalization and degradation. Interacts with MRC2. Interacts with PLAUR. In complex with SERPINE1, interacts with PLAUR/uPAR. Interacts with SORL1 and LRP1, either alone or in complex with SERPINE1; these interactions are abolished in the presence of LRPAP1/RAP. The ternary complex composed of PLAUR-PLAU-PAI1 also interacts with SORLA. Post-translationally, produced as an inactive single-chain protein (pro-uPA or sc-uPA), is processed into the active disulfide-linked two-chain form of PLAU/uPA by a proteolytic event mediated, at least, by TMPRSS4.

Its subcellular location is the secreted. It catalyses the reaction Specific cleavage of Arg-|-Val bond in plasminogen to form plasmin.. With respect to regulation, inhibited by SERPINA5. Inhibited by SERPINE1. Functionally, specifically cleaves the zymogen plasminogen to form the active enzyme plasmin. This Bos taurus (Bovine) protein is Urokinase-type plasminogen activator (PLAU).